Here is a 183-residue protein sequence, read N- to C-terminus: Transmembrane and coiled-coil domain-containing protein 2 (183 aa).

A helical transmembrane segment spans residues 54-74 (VQIILGISFLTLLAIGLFALW). Positions 127–150 (GLQEKILKKLQMVENKVRDLEGII) form a coiled coil.

The protein localises to the membrane. The sequence is that of Transmembrane and coiled-coil domain-containing protein 2 (Tmco2) from Mus musculus (Mouse).